A 237-amino-acid polypeptide reads, in one-letter code: Phosphoribosylaminoimidazole-succinocarboxamide synthase (237 aa).

Belongs to the SAICAR synthetase family.

It carries out the reaction 5-amino-1-(5-phospho-D-ribosyl)imidazole-4-carboxylate + L-aspartate + ATP = (2S)-2-[5-amino-1-(5-phospho-beta-D-ribosyl)imidazole-4-carboxamido]succinate + ADP + phosphate + 2 H(+). Its pathway is purine metabolism; IMP biosynthesis via de novo pathway; 5-amino-1-(5-phospho-D-ribosyl)imidazole-4-carboxamide from 5-amino-1-(5-phospho-D-ribosyl)imidazole-4-carboxylate: step 1/2. The sequence is that of Phosphoribosylaminoimidazole-succinocarboxamide synthase from Proteus mirabilis (strain HI4320).